Reading from the N-terminus, the 103-residue chain is MLLTTTDVLQGREVERYLGIVTAEVVYGTNVLRDFLASLRNIIGGRTRTYEEVLENAQKKVLEELEQRAKRLGANGILGVSIHTNMSATMILVTAAGTAVKLR.

This sequence belongs to the UPF0145 family.

This is UPF0145 protein CYA_2258 from Synechococcus sp. (strain JA-3-3Ab) (Cyanobacteria bacterium Yellowstone A-Prime).